A 406-amino-acid chain; its full sequence is Arginine deiminase (406 aa).

The Amidino-cysteine intermediate role is filled by C396.

It belongs to the arginine deiminase family.

The protein localises to the cytoplasm. It carries out the reaction L-arginine + H2O = L-citrulline + NH4(+). The protein operates within amino-acid degradation; L-arginine degradation via ADI pathway; carbamoyl phosphate from L-arginine: step 1/2. This is Arginine deiminase from Salmonella typhimurium (strain LT2 / SGSC1412 / ATCC 700720).